Consider the following 543-residue polypeptide: Membrane protein insertase YidC (543 aa).

The chain crosses the membrane as a helical span at residues 7 to 27; sequence FLLIGLAMVSFLLWQQWQVDY. The segment at 30-61 is disordered; that stretch reads QPAQPVESQQTTGSDAPNSNGDVPIATPTNKS. Positions 35-61 are enriched in polar residues; the sequence is VESQQTTGSDAPNSNGDVPIATPTNKS. The next 4 helical transmembrane spans lie at 341–361, 421–441, 451–471, and 499–519; these read FAFL…IILI, GGCF…WVLL, FIFW…PILT, and PVAM…YWLI.

Belongs to the OXA1/ALB3/YidC family. Type 1 subfamily. In terms of assembly, interacts with the Sec translocase complex via SecD. Specifically interacts with transmembrane segments of nascent integral membrane proteins during membrane integration.

The protein localises to the cell inner membrane. Required for the insertion and/or proper folding and/or complex formation of integral membrane proteins into the membrane. Involved in integration of membrane proteins that insert both dependently and independently of the Sec translocase complex, as well as at least some lipoproteins. Aids folding of multispanning membrane proteins. This Pseudoalteromonas atlantica (strain T6c / ATCC BAA-1087) protein is Membrane protein insertase YidC.